Here is a 367-residue protein sequence, read N- to C-terminus: Peptide chain release factor 2 (367 aa).

N5-methylglutamine is present on Gln254.

The protein belongs to the prokaryotic/mitochondrial release factor family. In terms of processing, methylated by PrmC. Methylation increases the termination efficiency of RF2.

It is found in the cytoplasm. Functionally, peptide chain release factor 2 directs the termination of translation in response to the peptide chain termination codons UGA and UAA. This chain is Peptide chain release factor 2, found in Neisseria meningitidis serogroup B (strain ATCC BAA-335 / MC58).